We begin with the raw amino-acid sequence, 288 residues long: MDKLIKTISESGSFRAYALDSTETVRTAQEKHNTLSSSTVALGRTLIANQILAANQKGDSKITVKVIGNGSFGHIISVADTKGHVKGYIQNPGVDIKKTATGEVLVGPFMGHGQFVSIIDYGTGNPYTSSTPLISGEIGEDFAYYLTESEQTPSAVGLNVLLDKEDKVKVAGGFMLQVLPGASEEEIARYEKRIQEMPAISTLLESDDHIEALLNAIYGDEPFKRLSEEELSFECDCSRERFENALLTLGKDELQAMKDEDHGAEIVCQFCQTKYEFSEADLEELIND.

2 disulfide bridges follow: C235-C237 and C268-C271.

The protein belongs to the HSP33 family. Post-translationally, under oxidizing conditions two disulfide bonds are formed involving the reactive cysteines. Under reducing conditions zinc is bound to the reactive cysteines and the protein is inactive.

It is found in the cytoplasm. In terms of biological role, redox regulated molecular chaperone. Protects both thermally unfolding and oxidatively damaged proteins from irreversible aggregation. Plays an important role in the bacterial defense system toward oxidative stress. The polypeptide is 33 kDa chaperonin (Streptococcus thermophilus (strain ATCC BAA-250 / LMG 18311)).